The sequence spans 216 residues: Ras-related protein RABA1a (216 aa).

20 to 27 (GDSGVGKS) contributes to the GTP binding site. The Effector region motif lies at 42–50 (SKSTIGVEF). GTP is bound by residues 68-72 (DTAGQ), 126-129 (NKCD), and 156-157 (SA). S-geranylgeranyl cysteine attachment occurs at residues Cys213 and Cys214.

This sequence belongs to the small GTPase superfamily. Rab family.

It localises to the cell membrane. Functionally, involved in auxin-mediated response. May be involved in vesicle trafficking of components involved in polar auxin transport. Binds GTP and GDP and possesses intrinsic GTPase activity. The sequence is that of Ras-related protein RABA1a (RABA1A) from Arabidopsis thaliana (Mouse-ear cress).